The following is a 133-amino-acid chain: Large-conductance mechanosensitive channel (133 aa).

Transmembrane regions (helical) follow at residues 17-37 (AFILKGNVVELAVAVIIGGAF) and 73-93 (IGSFAGSVIDFLIIAFVLYLA).

This sequence belongs to the MscL family. In terms of assembly, homopentamer.

It localises to the cell inner membrane. Channel that opens in response to stretch forces in the membrane lipid bilayer. May participate in the regulation of osmotic pressure changes within the cell. This is Large-conductance mechanosensitive channel from Synechococcus elongatus (strain ATCC 33912 / PCC 7942 / FACHB-805) (Anacystis nidulans R2).